Consider the following 773-residue polypeptide: Disintegrin and metalloproteinase domain-containing protein 11 (773 aa).

The signal sequence occupies residues 1–24 (MRRLRRWAIAALLLLPLLPPPGLG). Positions 25-229 (ALGPRGALHW…PNWPKLRRKR (205 aa)) are excised as a propeptide. Positions 36–82 (SSAHVGSPESPEGSEVTEPSRLVRQSSGGEVRKPQLDTRVRQDPPRG) are disordered. Residues 65-79 (EVRKPQLDTRVRQDP) are compositionally biased toward basic and acidic residues. Residues Asn-100 and Asn-167 are each glycosylated (N-linked (GlcNAc...) asparagine). The Extracellular portion of the chain corresponds to 230 to 738 (QVRRGHPTVH…ERYKGPSGTN (509 aa)). Residues 243 to 442 (KYVELIVIND…GGGSCLFNKP (200 aa)) enclose the Peptidase M12B domain. The tract at residues 336–773 (GRTFQSTSSG…NIRRGRSGGA (438 aa)) is required for localization to cerebellar cortex basket cell terminals. Also required for localization of KCNA1, KCNA2, DLG4 and ADAM22 to cerebellar cortex basket cell terminal perisomatic axons and pinceaux. 4 cysteine pairs are disulfide-bonded: Cys-353/Cys-437, Cys-396/Cys-421, Cys-398/Cys-405, and Cys-507/Cys-527. In terms of domain architecture, Disintegrin spans 448–535 (PPECGNGFVE…QCPPNLHKLD (88 aa)). 2 N-linked (GlcNAc...) asparagine glycosylation sites follow: Asn-609 and Asn-677. Cystine bridges form between Cys-681–Cys-696, Cys-690–Cys-702, and Cys-704–Cys-713. In terms of domain architecture, EGF-like spans 681-713 (CPGSGERRICSHHGVCSNEGKCICQPDWTGKDC). The chain crosses the membrane as a helical span at residues 739-759 (IIIGSIAGAVLVAAIVLGGTG). The Cytoplasmic segment spans residues 760–773 (WGFKNIRRGRSGGA).

As to quaternary structure, interacts with LGI1 and LGI4. Interacts with KCNA1/KV1.1, KCNA2/KV1.2, DLG4/PSD-95 and ADAM22. The precursor is cleaved by a furin endopeptidase. In terms of tissue distribution, abundantly expressed in cerebellar cortex basket cell terminals and pinceaux, weakly expressed in Purkinje cells (at protein level). Weakly expressed in the heart. Abundantly in expressed in neurons throughout the central nervous system including the telencephalon, diencephalic and brainstem nuclei, cerebellum and spinal cord. Expressed in the peripheral nervous system trigeminal and dorsal root ganglia. Expressed in the ganglion and bipolar cells of the retinae and weakly in the cornea of the eyes. Expressed in the hepatocytes of the parenchyma and hepatic lobules of the liver. Expressed in distinct focal areas in the juxtamedullary cortex of the kidney. Expressed in spermatocytes in the seminiferous tubules of the testes. Expressed in the stratum spinosum of the stratified squamous epithelia of the tongue and esophagus.

It localises to the presynaptic cell membrane. The protein resides in the perikaryon. The protein localises to the cell projection. It is found in the axon. Probable ligand for integrin in the brain. This is a non catalytic metalloprotease-like protein. Required for localization of the potassium channel subunit proteins KCNA1/KV1.1 and KCNA2/KV1.2 at cerebellar cortex basket cell distal terminals, is thereby involved in ephaptic inhibitory synchronization of Purkinje cell firing and response to stress. Plays a role in spatial learning and motor coordination. Involved in the nociceptive pain response to chemical-derived stimulation. This is Disintegrin and metalloproteinase domain-containing protein 11 (Adam11) from Mus musculus (Mouse).